The sequence spans 294 residues: Nucleoside-specific channel-forming protein Tsx (294 aa).

The first 22 residues, 1–22, serve as a signal peptide directing secretion; sequence MKKTLLAASAVVALSASFTAGA.

This sequence belongs to the nucleoside-specific channel-forming outer membrane porin (Tsx) (TC 1.B.10) family.

The protein resides in the cell outer membrane. In terms of biological role, functions as a substrate-specific channel for nucleosides and deoxynucleosides. Also functions in albicidin uptake and as receptor for colicin K. Also is a receptor for several Tsx-specific bacteriophages. This chain is Nucleoside-specific channel-forming protein Tsx, found in Klebsiella aerogenes (strain ATCC 13048 / DSM 30053 / CCUG 1429 / JCM 1235 / KCTC 2190 / NBRC 13534 / NCIMB 10102 / NCTC 10006 / CDC 819-56) (Enterobacter aerogenes).